We begin with the raw amino-acid sequence, 146 residues long: Protein SprT-like (146 aa).

The SprT-like domain maps to 4–142 (NEYVKQVSLE…GRCKGKLRLL (139 aa)). Residue H64 participates in Zn(2+) binding. The active site involves E65. A Zn(2+)-binding site is contributed by H68.

Belongs to the SprT family. Requires Zn(2+) as cofactor.

The protein localises to the cytoplasm. The chain is Protein SprT-like from Streptococcus gordonii (strain Challis / ATCC 35105 / BCRC 15272 / CH1 / DL1 / V288).